Reading from the N-terminus, the 344-residue chain is Phenylalanine--tRNA ligase alpha subunit (344 aa).

Glutamate 256 provides a ligand contact to Mg(2+).

The protein belongs to the class-II aminoacyl-tRNA synthetase family. Phe-tRNA synthetase alpha subunit type 1 subfamily. As to quaternary structure, tetramer of two alpha and two beta subunits. The cofactor is Mg(2+).

Its subcellular location is the cytoplasm. It catalyses the reaction tRNA(Phe) + L-phenylalanine + ATP = L-phenylalanyl-tRNA(Phe) + AMP + diphosphate + H(+). The protein is Phenylalanine--tRNA ligase alpha subunit of Bacillus anthracis (strain CDC 684 / NRRL 3495).